A 771-amino-acid polypeptide reads, in one-letter code: U3 small nucleolar RNA-associated protein 14 homolog A (771 aa).

The tract at residues 23-49 (PKDYLLSESEDEGDNDGERKHQKLLEA) is disordered. Ser-29, Ser-31, Ser-52, Ser-77, and Ser-81 each carry phosphoserine. Residues 40–67 (ERKHQKLLEAISSLDGKNRRKLAERSEA) adopt a coiled-coil conformation. Lys-122 is covalently cross-linked (Glycyl lysine isopeptide (Lys-Gly) (interchain with G-Cter in SUMO2)). Thr-205 carries the phosphothreonine modification. Coiled-coil stretches lie at residues 216–290 (SLEE…EKAR) and 317–347 (LEARQAMQEQLSKNKELTQKLQVASESEEEE). Disordered stretches follow at residues 334–355 (TQKLQVASESEEEEGGTEDVEE) and 367–557 (MNAD…KKEQ). Residues 342-355 (ESEEEEGGTEDVEE) are compositionally biased toward acidic residues. The segment covering 399 to 436 (LEAHGVSESEGEERPVAEEEILLREFEERRSLRKRSEL) has biased composition (basic and acidic residues). Phosphoserine is present on residues Ser-405 and Ser-407. Arg-433 carries the citrulline modification. Ser-437 and Ser-445 each carry phosphoserine. Lys-449 participates in a covalent cross-link: Glycyl lysine isopeptide (Lys-Gly) (interchain with G-Cter in SUMO2). Ser-453 is modified (phosphoserine). A compositionally biased stretch (basic and acidic residues) spans 504-529 (RPERVQTLEELEELGKEECFQNKELP). Residue Lys-519 forms a Glycyl lysine isopeptide (Lys-Gly) (interchain with G-Cter in SUMO2) linkage. Positions 535 to 544 (GQQSERTPNN) are enriched in polar residues. The span at 547 to 557 (DAPKEKKKKEQ) shows a compositional bias: basic and acidic residues. Position 569 is a phosphoserine (Ser-569). Arg-589 is modified (citrulline). Lys-733 is covalently cross-linked (Glycyl lysine isopeptide (Lys-Gly) (interchain with G-Cter in SUMO2)). Residues 740-751 (RSSSRSDLSVIQ) show a composition bias toward polar residues. Residues 740 to 771 (RSSSRSDLSVIQRNPKRITTRHKKQLKKCSVD) form a disordered region. A compositionally biased stretch (basic residues) spans 753–771 (NPKRITTRHKKQLKKCSVD).

Belongs to the UTP14 family. In terms of assembly, interacts with DHX37. Citrullinated by PADI4. In terms of tissue distribution, ubiquitously expressed.

It is found in the nucleus. The protein localises to the nucleolus. In terms of biological role, may be required for ribosome biogenesis. The polypeptide is U3 small nucleolar RNA-associated protein 14 homolog A (UTP14A) (Homo sapiens (Human)).